Here is a 250-residue protein sequence, read N- to C-terminus: Probable transcriptional regulatory protein DIP1378 (250 aa).

The tract at residues 1–22 is disordered; that stretch reads MSGHSKWATTKHKKAANDAKRG.

This sequence belongs to the TACO1 family.

Its subcellular location is the cytoplasm. In Corynebacterium diphtheriae (strain ATCC 700971 / NCTC 13129 / Biotype gravis), this protein is Probable transcriptional regulatory protein DIP1378.